The primary structure comprises 393 residues: NAD(P)H-quinone oxidoreductase subunit H, chloroplastic (393 aa).

Belongs to the complex I 49 kDa subunit family. In terms of assembly, NDH is composed of at least 16 different subunits, 5 of which are encoded in the nucleus.

It is found in the plastid. The protein localises to the chloroplast thylakoid membrane. The catalysed reaction is a plastoquinone + NADH + (n+1) H(+)(in) = a plastoquinol + NAD(+) + n H(+)(out). The enzyme catalyses a plastoquinone + NADPH + (n+1) H(+)(in) = a plastoquinol + NADP(+) + n H(+)(out). Its function is as follows. NDH shuttles electrons from NAD(P)H:plastoquinone, via FMN and iron-sulfur (Fe-S) centers, to quinones in the photosynthetic chain and possibly in a chloroplast respiratory chain. The immediate electron acceptor for the enzyme in this species is believed to be plastoquinone. Couples the redox reaction to proton translocation, and thus conserves the redox energy in a proton gradient. This Olimarabidopsis pumila (Dwarf rocket) protein is NAD(P)H-quinone oxidoreductase subunit H, chloroplastic.